Reading from the N-terminus, the 359-residue chain is 4-galactosyl-N-acetylglucosaminide 3-alpha-L-fucosyltransferase 9 (359 aa).

Topologically, residues 1–11 (MTSTSKGILRP) are cytoplasmic. Residues 12-32 (FLIVCVILACFMACLLIYIKP) traverse the membrane as a helical; Signal-anchor for type II membrane protein segment. The Lumenal portion of the chain corresponds to 33-359 (TNSWVFSPME…VGNLEKWFWN (327 aa)). A glycan (N-linked (GlcNAc...) asparagine) is linked at Asn-62. The segment at 63-168 (ETTILVWVWP…RRDSDIQVPY (106 aa)) is acceptor-binding. Gln-75 provides a ligand contact to a beta-D-galactosyl-(1-&gt;4)-N-acetyl-beta-D-glucosaminyl derivative. 3 disulfides stabilise this stretch: Cys-82–Cys-335, Cys-91–Cys-338, and Cys-190–Cys-238. Asn-101 carries N-linked (GlcNAc...) asparagine glycosylation. A beta-D-galactosyl-(1-&gt;4)-N-acetyl-beta-D-glucosaminyl derivative is bound at residue Glu-137. Glu-137 serves as the catalytic Nucleophile. Glu-137 is a binding site for GDP-beta-L-fucose. Asn-153 carries N-linked (GlcNAc...) asparagine glycosylation. Residues Tyr-168, Val-192, Ser-194, Asn-195, Arg-202, Val-226, Tyr-241, Asn-246, Tyr-252, Glu-255, and Lys-256 each coordinate GDP-beta-L-fucose. A donor-binding region spans residues 169–326 (GFLTVSTNPF…NWRKDFTVNL (158 aa)). Residues 327 to 359 (PRFWESHACLACDHVKRHQEYKSVGNLEKWFWN) form an acceptor-binding region.

This sequence belongs to the glycosyltransferase 10 family. Homodimer. Post-translationally, N-glycosylated with complex-type N-glycans.

It is found in the golgi apparatus. It localises to the trans-Golgi network membrane. The protein localises to the golgi apparatus membrane. The catalysed reaction is a beta-D-galactosyl-(1-&gt;4)-N-acetyl-beta-D-glucosaminyl derivative + GDP-beta-L-fucose = a beta-D-galactosyl-(1-&gt;4)-[alpha-L-fucosyl-(1-&gt;3)]-N-acetyl-beta-D-glucosaminyl derivative + GDP + H(+). The enzyme catalyses an alpha-Neu5Ac-(2-&gt;3)-beta-D-Gal-(1-&gt;4)-beta-D-GlcNAc-(1-&gt;3)-beta-D-Gal-(1-&gt;4)-beta-D-GlcNAc derivative + GDP-beta-L-fucose = an alpha-Neu5Ac-(2-&gt;3)-beta-D-Gal-(1-&gt;4)-beta-D-GlcNAc-(1-&gt;3)-beta-D-Gal-(1-&gt;4)-[alpha-L-Fuc-(1-&gt;3)]-beta-D-GlcNAc derivative + GDP + H(+). It catalyses the reaction alpha-N-glycoloylneuraminosyl-(2-&gt;3)-beta-D-galactosyl-(1-&gt;4)-N-acetyl-beta-D-glucosaminyl-(1-&gt;3)-beta-D-galactosyl-(1-&gt;4)-N-acetyl-beta-D-glucosaminyl-(1-&gt;3)-beta-D-galactosyl-(1-&gt;4)-beta-D-glucosyl-(1&lt;-&gt;1')-ceramide + GDP-beta-L-fucose = alpha-N-glycoloylneuraminosyl-(2-&gt;3)-beta-D-galactosyl-(1-&gt;4)-N-acetyl-beta-D-glucosaminyl-(1-&gt;3)-beta-D-galactosyl-(1-&gt;4)-[alpha-L-fucosyl-(1-&gt;3)]-N-acetyl-beta-D-glucosaminyl-(1-&gt;3)-beta-D-galactosyl-(1-&gt;4)-beta-D-glucosyl-(1&lt;-&gt;1')-ceramide + GDP + H(+). It carries out the reaction alpha-D-galactosyl-(1-&gt;3)-beta-D-galactosyl-(1-&gt;4)-N-acetyl-beta-D-glucosaminyl-(1-&gt;3)-beta-D-galactosyl-(1-&gt;4)-beta-D-glucosyl-(1&lt;-&gt;1')-ceramide + GDP-beta-L-fucose = a neolactoside IV(3)-alpha-Gal,III(3)-alpha-Fuc-nLc4Cer + GDP + H(+). The catalysed reaction is a neolactoside nLc4Cer + GDP-beta-L-fucose = a neolactoside III(3)-alpha-Fuc-nLc4Cer + GDP + H(+). The enzyme catalyses an N-acetyl-alpha-neuraminyl-(2-&gt;3)-beta-D-galactosyl-(1-&gt;4)-N-acetyl-beta-D-glucosaminyl derivative + GDP-beta-L-fucose = an alpha-Neu5Ac-(2-&gt;3)-beta-D-Gal-(1-&gt;4)-[alpha-L-Fuc-(1-&gt;3)]-beta-D-GlcNAc derivative + GDP + H(+). It catalyses the reaction beta-D-Gal-(1-&gt;4)-beta-D-GlcNAc-(1-&gt;3)-beta-D-Gal-(1-&gt;4)-D-Glc + GDP-beta-L-fucose = beta-D-Gal-(1-&gt;4)-[alpha-L-Fuc-(1-&gt;3)]-beta-D-GlcNAc-(1-&gt;3)-beta-D-Gal-(1-&gt;4)-D-Glc + GDP + H(+). It carries out the reaction an alpha-L-Fuc-(1-&gt;2)-beta-D-Gal-(1-&gt;4)-beta-D-GlcNAc derivative + GDP-beta-L-fucose = an alpha-L-Fuc-(1-&gt;2)-beta-D-Gal-(1-&gt;4)-[alpha-L-Fuc-(1-&gt;3)]-beta-D-GlcNAc derivative + GDP + H(+). It functions in the pathway protein modification; protein glycosylation. It participates in glycolipid biosynthesis. Its activity is regulated as follows. Activated by Mn2+. Functionally, catalyzes alpha(1-&gt;3) linkage of fucosyl moiety transferred from GDP-beta-L-fucose to N-acetyl glucosamine (GlcNAc) within type 2 lactosamine (LacNAc, beta-D-Gal-(1-&gt;4)-beta-D-GlcNAc-) glycan attached to glycolipids and N- or O-linked glycoproteins. Fucosylates distal type 2 LacNAc and its fucosylated (H-type 2 LacNAc) and sialylated (sialyl-type 2 LacNAc) derivatives to form Lewis x (Lex) (CD15) and Lewis y (Ley) antigenic epitopes involved in cell adhesion and differentiation. Generates Lex epitopes in the brain, presumably playing a role in the maintenance of neuronal stemness and neurite outgrowth in progenitor neural cells. Fucosylates the internal type 2 LacNAc unit of the polylactosamine chain to form VIM-2 antigen that serves as recognition epitope for SELE. Can also modify milk oligosaccharides in particular type 2 tetrasaccharide LNnT. The protein is 4-galactosyl-N-acetylglucosaminide 3-alpha-L-fucosyltransferase 9 of Cricetulus griseus (Chinese hamster).